A 429-amino-acid polypeptide reads, in one-letter code: Serine--tRNA ligase (429 aa).

Position 236-238 (Thr-236–Glu-238) interacts with L-serine. Arg-267–Glu-269 serves as a coordination point for ATP. Glu-290 serves as a coordination point for L-serine. Glu-354–Ser-357 contacts ATP. L-serine is bound at residue Ser-390.

It belongs to the class-II aminoacyl-tRNA synthetase family. Type-1 seryl-tRNA synthetase subfamily. As to quaternary structure, homodimer. The tRNA molecule binds across the dimer.

The protein resides in the cytoplasm. It carries out the reaction tRNA(Ser) + L-serine + ATP = L-seryl-tRNA(Ser) + AMP + diphosphate + H(+). It catalyses the reaction tRNA(Sec) + L-serine + ATP = L-seryl-tRNA(Sec) + AMP + diphosphate + H(+). Its pathway is aminoacyl-tRNA biosynthesis; selenocysteinyl-tRNA(Sec) biosynthesis; L-seryl-tRNA(Sec) from L-serine and tRNA(Sec): step 1/1. Functionally, catalyzes the attachment of serine to tRNA(Ser). Is also able to aminoacylate tRNA(Sec) with serine, to form the misacylated tRNA L-seryl-tRNA(Sec), which will be further converted into selenocysteinyl-tRNA(Sec). In Photorhabdus laumondii subsp. laumondii (strain DSM 15139 / CIP 105565 / TT01) (Photorhabdus luminescens subsp. laumondii), this protein is Serine--tRNA ligase.